We begin with the raw amino-acid sequence, 709 residues long: Caprin-1 (709 aa).

Low complexity-rich tracts occupy residues Met-1–Ser-15 and Gly-22–Ala-43. The tract at residues Met-1–Gln-50 is disordered. Pro-2 is subject to N-acetylproline. Position 2 is an N-acetylalanine (Pro-2). Ser-10 carries the phosphoserine modification. A coiled-coil region spans residues Val-60–Asp-94. At Ser-115 the chain carries Phosphoserine. A coiled-coil region spans residues Lys-125–Gln-153. Residue Arg-165 is modified to Omega-N-methylarginine. Residues Glu-260–Ser-291 form a disordered region. Acidic residues predominate over residues Gln-271–Ser-291. A phosphoserine mark is found at Ser-335 and Ser-343. Residues Gln-360–Glu-381 form a G3BP1-binding region. Disordered stretches follow at residues Leu-417–Gln-446, Thr-475–Lys-499, and Ala-524–Asn-709. Residues Pro-433–Gln-446 are compositionally biased toward polar residues. Composition is skewed to low complexity over residues Gln-477–Gln-491 and Gln-537–Val-570. Residues Pro-577–Tyr-605 show a composition bias toward polar residues. Residue Tyr-625 is modified to Phosphotyrosine; by EPHA4. Arg-626 and Arg-633 each carry omega-N-methylarginine. 2 positions are modified to phosphotyrosine; by EPHA4: Tyr-636 and Tyr-639. Arg-640 carries the post-translational modification Omega-N-methylarginine. The segment covering Ser-642–Ser-657 has biased composition (polar residues). O-linked (GlcNAc) serine glycosylation is found at Ser-644 and Ser-649. Phosphotyrosine; by EPHA4 occurs at positions 651, 662, 665, and 670. Low complexity-rich tracts occupy residues Arg-676–Ala-686 and Asn-697–Asn-709. Arg-698 bears the Asymmetric dimethylarginine; alternate mark. Arg-698 carries the omega-N-methylarginine; alternate modification.

This sequence belongs to the caprin family. May form homomultimers. Interacts with G3BP1; interaction is direct and promotes stress granule formation. Interacts with G3BP2; interaction is direct and promotes stress granule formation. Interacts with PQBP1. Interacts with DDX3X. Interacts (when phosphorylated by EPHA4) with FMR1; interaction with FMR1 promotes formation of a membraneless compartment. As to quaternary structure, (Microbial infection) Interacts with Zika virus capsid protein C; this interaction is probably linked to the inhibition of stress granules formation by the virus. In terms of assembly, (Microbial infection) Interacts with rotavirus A non-structural protein 5; this interaction probably plays a role in the sequestration of CAPRIN1 in viral factories. (Microbial infection) Interacts with Japanese encephalitis virus capsid protein C; this interaction is involved in the suppression of the integrated stress response by the virus. In terms of processing, tyrosine phosphorylation by EPHA4 promotes interaction with FMR1 and liquid-liquid phase separation (LLPS) for the formation of a membraneless compartment that concentrates mRNAs with associated regulatory factors. O-glycosylated (O-GlcNAcylated), in a cell cycle-dependent manner. O-glycosylation by OGT inhibit ability to undergo liquid-liquid phase separation (LLPS). As to expression, ubiquitous.

It is found in the cytoplasm. It localises to the cytoplasmic ribonucleoprotein granule. The protein localises to the cytosol. Its subcellular location is the cell projection. The protein resides in the dendrite. It is found in the lamellipodium. Ability to mediate liquid-liquid phase separation is regulated by ATP: moderate concentrations of ATP enhance phase separation, whereas high concentrations of ATP lead to inhibition of phase separation. MRNA-binding protein that acts as a regulator of mRNAs transport, translation and/or stability, and which is involved in neurogenesis, synaptic plasticity in neurons and cell proliferation and migration in multiple cell types. Plays an essential role in cytoplasmic stress granule formation. Acts as an mRNA regulator by mediating formation of some phase-separated membraneless compartment: undergoes liquid-liquid phase separation upon binding to target mRNAs, leading to assemble mRNAs into cytoplasmic ribonucleoprotein granules that concentrate mRNAs with associated regulatory factors. Undergoes liquid-liquid phase separation following phosphorylation and interaction with FMR1, promoting formation of cytoplasmic ribonucleoprotein granules that concentrate mRNAs with factors that inhibit translation and mediate deadenylation of target mRNAs. In these cytoplasmic ribonucleoprotein granules, CAPRIN1 mediates recruitment of CNOT7 deadenylase, leading to mRNA deadenylation and degradation. Binds directly and selectively to MYC and CCND2 mRNAs. In neuronal cells, directly binds to several mRNAs associated with RNA granules, including BDNF, CAMK2A, CREB1, MAP2, NTRK2 mRNAs, as well as to GRIN1 and KPNB1 mRNAs, but not to rRNAs. The protein is Caprin-1 of Homo sapiens (Human).